The following is a 203-amino-acid chain: Dephospho-CoA kinase (203 aa).

In terms of domain architecture, DPCK spans 6–203 (ILGLTGGIGS…FYLTLRGGRA (198 aa)). ATP is bound at residue 14–19 (GSGKSA).

The protein belongs to the CoaE family.

The protein resides in the cytoplasm. It carries out the reaction 3'-dephospho-CoA + ATP = ADP + CoA + H(+). It functions in the pathway cofactor biosynthesis; coenzyme A biosynthesis; CoA from (R)-pantothenate: step 5/5. Catalyzes the phosphorylation of the 3'-hydroxyl group of dephosphocoenzyme A to form coenzyme A. This is Dephospho-CoA kinase from Pseudomonas aeruginosa (strain ATCC 15692 / DSM 22644 / CIP 104116 / JCM 14847 / LMG 12228 / 1C / PRS 101 / PAO1).